A 38-amino-acid chain; its full sequence is CHH precursor-related peptide (38 aa).

Residues 18–38 (GALEPSTPLGDLSGSLGHPVE) form a disordered region.

In terms of tissue distribution, produced by the medulla terminalis X-organ in the eyestalks and transported to the sinus gland where it is stored and released.

The protein localises to the secreted. The polypeptide is CHH precursor-related peptide (Cancer pagurus (Rock crab)).